Consider the following 366-residue polypeptide: tRNA pseudouridine synthase B (366 aa).

Residues 1–55 are disordered; that stretch reads MTVTTPDALLAPHDVQHAGADESAAQIRKPRDNNDPRNANRGGGNGKPRRDKRDV. Asp92 serves as the catalytic Nucleophile.

It belongs to the pseudouridine synthase TruB family. Type 1 subfamily.

The enzyme catalyses uridine(55) in tRNA = pseudouridine(55) in tRNA. In terms of biological role, responsible for synthesis of pseudouridine from uracil-55 in the psi GC loop of transfer RNAs. In Rhodopseudomonas palustris (strain ATCC BAA-98 / CGA009), this protein is tRNA pseudouridine synthase B.